Consider the following 295-residue polypeptide: HTH-type transcriptional regulator ShiR (295 aa).

An HTH lysR-type domain is found at 1 to 58; the sequence is MEIRWLEGFIAVAEELHFSNAAIRLGMPQSPLSQLIRRLESELGQKLFDRSTRSVELT. The segment at residues 18 to 37 is a DNA-binding region (H-T-H motif); sequence FSNAAIRLGMPQSPLSQLIR.

Belongs to the LysR transcriptional regulatory family.

In terms of biological role, activates expression of the shikimate transporter ShiA in the presence of shikimate. Binds to the shiA promoter region. This Corynebacterium glutamicum (strain R) protein is HTH-type transcriptional regulator ShiR.